An 813-amino-acid chain; its full sequence is Xaa-Pro dipeptidyl-peptidase (813 aa).

Residues S375, D495, and H526 each act as charge relay system in the active site.

The protein belongs to the peptidase S15 family. Homodimer.

The protein localises to the cytoplasm. It carries out the reaction Hydrolyzes Xaa-Pro-|- bonds to release unblocked, N-terminal dipeptides from substrates including Ala-Pro-|-p-nitroanilide and (sequentially) Tyr-Pro-|-Phe-Pro-|-Gly-Pro-|-Ile.. Its function is as follows. Removes N-terminal dipeptides sequentially from polypeptides having unsubstituted N-termini provided that the penultimate residue is proline. The polypeptide is Xaa-Pro dipeptidyl-peptidase (Lactiplantibacillus plantarum (strain ATCC BAA-793 / NCIMB 8826 / WCFS1) (Lactobacillus plantarum)).